Here is a 207-residue protein sequence, read N- to C-terminus: N-(5'-phosphoribosyl)anthranilate isomerase (207 aa).

This sequence belongs to the TrpF family.

It carries out the reaction N-(5-phospho-beta-D-ribosyl)anthranilate = 1-(2-carboxyphenylamino)-1-deoxy-D-ribulose 5-phosphate. It functions in the pathway amino-acid biosynthesis; L-tryptophan biosynthesis; L-tryptophan from chorismate: step 3/5. In Legionella pneumophila (strain Paris), this protein is N-(5'-phosphoribosyl)anthranilate isomerase.